The sequence spans 474 residues: L-arabinose isomerase (474 aa).

Positions 306, 331, 348, and 447 each coordinate Mn(2+).

The protein belongs to the arabinose isomerase family. Mn(2+) serves as cofactor.

The enzyme catalyses beta-L-arabinopyranose = L-ribulose. It participates in carbohydrate degradation; L-arabinose degradation via L-ribulose; D-xylulose 5-phosphate from L-arabinose (bacterial route): step 1/3. In terms of biological role, catalyzes the conversion of L-arabinose to L-ribulose. This Lactiplantibacillus plantarum (strain ATCC BAA-793 / NCIMB 8826 / WCFS1) (Lactobacillus plantarum) protein is L-arabinose isomerase.